The following is an 806-amino-acid chain: Phenylalanine--tRNA ligase beta subunit (806 aa).

Residues 40–155 enclose the tRNA-binding domain; the sequence is NKGVKGVVVG…SDAEVGADAL (116 aa). A B5 domain is found at 409–484; the sequence is VQERTVSVTA…RLYGYDHIPV (76 aa). Residues Asp462, Asp468, Glu471, and Glu472 each coordinate Mg(2+). The 94-residue stretch at 712–805 folds into the FDX-ACB domain; that stretch reads PRFPSMTRDM…VEEKFGAELR (94 aa).

It belongs to the phenylalanyl-tRNA synthetase beta subunit family. Type 1 subfamily. Tetramer of two alpha and two beta subunits. Mg(2+) serves as cofactor.

The protein localises to the cytoplasm. It catalyses the reaction tRNA(Phe) + L-phenylalanine + ATP = L-phenylalanyl-tRNA(Phe) + AMP + diphosphate + H(+). The chain is Phenylalanine--tRNA ligase beta subunit from Bacillus thuringiensis subsp. konkukian (strain 97-27).